A 146-amino-acid chain; its full sequence is uncharacterized protein (146 aa).

Positions 7 to 146 (LDINYKTDEL…DGHDVLVWTP (140 aa)) constitute an N-acetyltransferase domain.

This is an uncharacterized protein from Staphylococcus saprophyticus subsp. saprophyticus (strain ATCC 15305 / DSM 20229 / NCIMB 8711 / NCTC 7292 / S-41).